We begin with the raw amino-acid sequence, 213 residues long: Methylthioribulose-1-phosphate dehydratase (213 aa).

Residues histidine 104 and histidine 106 each coordinate Zn(2+).

This sequence belongs to the aldolase class II family. MtnB subfamily. Requires Zn(2+) as cofactor.

It catalyses the reaction 5-(methylsulfanyl)-D-ribulose 1-phosphate = 5-methylsulfanyl-2,3-dioxopentyl phosphate + H2O. Its pathway is amino-acid biosynthesis; L-methionine biosynthesis via salvage pathway; L-methionine from S-methyl-5-thio-alpha-D-ribose 1-phosphate: step 2/6. In terms of biological role, catalyzes the dehydration of methylthioribulose-1-phosphate (MTRu-1-P) into 2,3-diketo-5-methylthiopentyl-1-phosphate (DK-MTP-1-P). The polypeptide is Methylthioribulose-1-phosphate dehydratase (Stenotrophomonas maltophilia (strain R551-3)).